Consider the following 224-residue polypeptide: MNTDLALLRLLQLASPGLPVGGFTYSQGLEWAVEAGWVRSVAGFAAWQREQLHDTLGYLDWPVLARLYRACQADDAEVFAYWSRFLLANRETSELRLEETQRGSALARLLDGWQLGQDPAWRNGLELSQLGGMAWLGAHWAIPLRDLALGHGFAWLEGAVMAGVKLVPFGQQAAQTLLRDLGEELPAVLDHALVLDDEQLGGGLPLLAIASSRHETQYTRLFRS.

This sequence belongs to the UreF family. As to quaternary structure, ureD, UreF and UreG form a complex that acts as a GTP-hydrolysis-dependent molecular chaperone, activating the urease apoprotein by helping to assemble the nickel containing metallocenter of UreC. The UreE protein probably delivers the nickel.

It localises to the cytoplasm. In terms of biological role, required for maturation of urease via the functional incorporation of the urease nickel metallocenter. The chain is Urease accessory protein UreF from Pseudomonas entomophila (strain L48).